A 213-amino-acid polypeptide reads, in one-letter code: Putative thymidylate kinase 251L (213 aa).

An ATP-binding site is contributed by 21-28 (GCDKTGKS).

The protein belongs to the thymidylate kinase family.

The catalysed reaction is dTMP + ATP = dTDP + ADP. It participates in pyrimidine metabolism; dTTP biosynthesis. In terms of biological role, catalyzes the conversion of dTMP to dTDP. The chain is Putative thymidylate kinase 251L from Acheta domesticus (House cricket).